The chain runs to 326 residues: Tetraacyldisaccharide 4'-kinase (326 aa).

55–62 (TAGGNGKT) is an ATP binding site.

It belongs to the LpxK family.

It carries out the reaction a lipid A disaccharide + ATP = a lipid IVA + ADP + H(+). It participates in glycolipid biosynthesis; lipid IV(A) biosynthesis; lipid IV(A) from (3R)-3-hydroxytetradecanoyl-[acyl-carrier-protein] and UDP-N-acetyl-alpha-D-glucosamine: step 6/6. Transfers the gamma-phosphate of ATP to the 4'-position of a tetraacyldisaccharide 1-phosphate intermediate (termed DS-1-P) to form tetraacyldisaccharide 1,4'-bis-phosphate (lipid IVA). The protein is Tetraacyldisaccharide 4'-kinase of Klebsiella pneumoniae subsp. pneumoniae (strain ATCC 700721 / MGH 78578).